A 323-amino-acid chain; its full sequence is ADP-ribose glycohydrolase MACROD1 (323 aa).

Lys94, Lys101, and Lys127 each carry N6-succinyllysine. Lys136 participates in a covalent cross-link: Glycyl lysine isopeptide (Lys-Gly) (interchain with G-Cter in SUMO2). The Macro domain occupies 139-320 (DPKYKKDKQL…IYRERLPHYF (182 aa)). Residue 157–159 (GDI) participates in substrate binding. N6-acetyllysine is present on Lys161. Substrate-binding positions include 170–172 (AAN), 177–182 (GGGGVD), 265–271 (ISTGVFG), and Phe304.

Belongs to the MacroD-type family. MacroD1/2-like subfamily. As to quaternary structure, interacts with ESR1; Interacts in a manner that is estrogen independent but is enhanced by estrogen. Interacts (via macro domain) with AR.

The protein resides in the nucleus. It catalyses the reaction 3''-O-acetyl-ADP-D-ribose + H2O = ADP-D-ribose + acetate + H(+). The enzyme catalyses 2''-O-acetyl-ADP-D-ribose + H2O = ADP-D-ribose + acetate + H(+). The catalysed reaction is 4-O-(ADP-D-ribosyl)-L-aspartyl-[protein] + H2O = L-aspartyl-[protein] + ADP-D-ribose + H(+). It carries out the reaction 5-O-(ADP-D-ribosyl)-L-glutamyl-[protein] + H2O = L-glutamyl-[protein] + ADP-D-ribose + H(+). It catalyses the reaction alpha-NAD(+) + H2O = ADP-D-ribose + nicotinamide + H(+). Its activity is regulated as follows. Subject to competitive inhibition by the product ADP-ribose. Functionally, removes ADP-ribose from aspartate and glutamate residues in proteins bearing a single ADP-ribose moiety. Inactive towards proteins bearing poly-ADP-ribose. Deacetylates O-acetyl-ADP ribose, a signaling molecule generated by the deacetylation of acetylated lysine residues in histones and other proteins. Plays a role in estrogen signaling. Binds to androgen receptor (AR) and amplifies the transactivation function of AR in response to androgen. May play an important role in carcinogenesis and/or progression of hormone-dependent cancers by feed-forward mechanism that activates ESR1 transactivation. Could be an ESR1 coactivator, providing a positive feedback regulatory loop for ESR1 signal transduction. Could be involved in invasive growth by down-regulating CDH1 in endometrial cancer cells. Enhances ESR1-mediated transcription activity. This Mus musculus (Mouse) protein is ADP-ribose glycohydrolase MACROD1.